A 461-amino-acid polypeptide reads, in one-letter code: D-phenylhydantoinase (461 aa).

A divalent metal cation contacts are provided by His59, His61, and Lys151. Lys151 bears the N6-carboxylysine mark. Tyr156 contributes to the substrate binding site. Residues His182 and His239 each coordinate a divalent metal cation. Ser286 contacts substrate. Asp313 contributes to the a divalent metal cation binding site. Residue Asn335 coordinates substrate.

The protein belongs to the metallo-dependent hydrolases superfamily. Hydantoinase/dihydropyrimidinase family. Homotetramer. The cofactor is a divalent metal cation. Carboxylation allows a single lysine to coordinate two divalent metal cations.

It catalyses the reaction D-5-phenylhydantoin + H2O = N-carbamoyl-D-phenylglycine + H(+). In terms of biological role, catalyzes the stereospecific hydrolysis of the cyclic amide bond of D-hydantoin derivatives with an aromatic side chains at the 5'-position. Has no activity on dihydropyrimidines. The physiological function is unknown. The polypeptide is D-phenylhydantoinase (Escherichia coli (strain 55989 / EAEC)).